A 590-amino-acid chain; its full sequence is Pentatricopeptide repeat-containing protein At1g63070, mitochondrial (590 aa).

Residues 1-34 constitute a mitochondrion transit peptide; that stretch reads MMRSVAVIGKKCLHRHTVLLKGNPRTTLCWERSF. PPR repeat units follow at residues 74-108, 109-143, 144-178, 179-213, 214-248, 249-283, 284-318, 319-353, 355-389, 390-424, 425-459, 460-494, 495-529, and 530-564; these read SIVE…GISH, NLYT…GYGP, SIVT…GYQP, DTVT…GCQP, DLVT…KIEA, DVVI…GIKP, DVFT…NINP, DLVF…KHCF, DVVA…GLVG, NTVT…GVHP, DIMT…DMKL, DIVT…GVKP, NVVT…GPLP, and NSGT…GFAG.

This sequence belongs to the PPR family. P subfamily.

It is found in the mitochondrion. This chain is Pentatricopeptide repeat-containing protein At1g63070, mitochondrial, found in Arabidopsis thaliana (Mouse-ear cress).